Reading from the N-terminus, the 460-residue chain is Probable carboxypeptidase ARB_01041 (460 aa).

Residues 1-22 (MQKTYIWALVSLLASSLVDARS) form the signal peptide. N-linked (GlcNAc...) asparagine glycosylation occurs at N98. D175 contributes to the Zn(2+) binding site. E207 (proton acceptor) is an active-site residue. E208 serves as a coordination point for Zn(2+). N395 carries an N-linked (GlcNAc...) asparagine glycan.

It belongs to the peptidase M20A family. It depends on Zn(2+) as a cofactor.

It is found in the secreted. This is Probable carboxypeptidase ARB_01041 from Arthroderma benhamiae (strain ATCC MYA-4681 / CBS 112371) (Trichophyton mentagrophytes).